The following is a 182-amino-acid chain: MPVRPARCYRRIKGPPYTREEYIHGAPMIQIPKFDMGTTSAAARATFPMVAKLIVEERGQIRMQALEAARQMASKYLTKYVGDANYYLRLNVIPHHVLRENRMLAMAGADRLQEGMRLAFGSPAGRAARVEPGQILFYAEFKPEHLAHIKEAFRRAASKLPLPTRIVIEPKGDGDGKTATQG.

It belongs to the universal ribosomal protein uL16 family.

The protein is Large ribosomal subunit protein uL16 of Pyrobaculum arsenaticum (strain DSM 13514 / JCM 11321 / PZ6).